Here is a 674-residue protein sequence, read N- to C-terminus: DNA mismatch repair protein MutL (674 aa).

Belongs to the DNA mismatch repair MutL/HexB family.

Its function is as follows. This protein is involved in the repair of mismatches in DNA. It is required for dam-dependent methyl-directed DNA mismatch repair. May act as a 'molecular matchmaker', a protein that promotes the formation of a stable complex between two or more DNA-binding proteins in an ATP-dependent manner without itself being part of a final effector complex. This chain is DNA mismatch repair protein MutL, found in Clostridium perfringens (strain ATCC 13124 / DSM 756 / JCM 1290 / NCIMB 6125 / NCTC 8237 / Type A).